A 542-amino-acid chain; its full sequence is Importin subunit alpha-1 (542 aa).

The tract at residues 1-29 is disordered; that stretch reads MSASSRFIPEHRRQNYKGKGTFQADELRR. In terms of domain architecture, IBB spans 1 to 60; it reads MSASSRFIPEHRRQNYKGKGTFQADELRRRRETQQIEIRKQKREENLNKRRNLVDVQEPA. 8 ARM repeats span residues 114–155, 156–197, 198–240, 241–282, 283–324, 325–366, 367–408, and 409–453; these read IQKV…SSNQ, THVV…SPMC, RDHV…KNPQ, PDWN…ANEK, IQAI…DDVQ, TQVI…NSSQ, IQYV…GARR, and PDQI…GELD.

It belongs to the importin alpha family. As to quaternary structure, interacts with pap1.

It is found in the nucleus. Binds specifically and directly to substrates containing either a simple or bipartite NLS motif. Promotes docking of import substrates to the nuclear envelope. Seems to act as a cytosolic receptor for both simple and bipartite NLS motifs. Has an essential role in mitotic chromosome condensation. Involved in nuclear protein import. Required for efficient nuclear import of both an SV40 nuclear localization signal-containing reporter protein and the pap1 component of the stress response MAP kinase pathway. Required for proper mitotic progression. This chain is Importin subunit alpha-1 (cut15), found in Schizosaccharomyces pombe (strain 972 / ATCC 24843) (Fission yeast).